The sequence spans 149 residues: Early lymphoid activation gene protein (149 aa).

In terms of tissue distribution, expressed in heart, kidney, lung, and skeletal muscle, with lower levels in pancreas and liver.

Its function is as follows. May function as an early signal that helps mediate the activation of T-cells. The sequence is that of Early lymphoid activation gene protein (DIAPH2-AS1) from Homo sapiens (Human).